The primary structure comprises 330 residues: Protein IN CHLOROPLAST ATPASE BIOGENESIS, chloroplastic (330 aa).

A chloroplast-targeting transit peptide spans 1–35 (MGSISMHITPSTALPIRHFRARVSCCSSGHVSFIK).

Interacts with ATPC1.

The protein resides in the plastid. It is found in the chloroplast stroma. Involved in the assembly of the F(1) ATP synthase in chloroplast thylakoid membranes. Functions downstream of the CPN60 chaperones to promote assembly of the catalytically active core of the chloroplast ATP synthase. Assists the assembly of the ATP synthase gamma subunit into the active F(1) core downstream of CPN60-mediated folding, which is critical for the biogenesis of the chloroplast ATP synthase. The sequence is that of Protein IN CHLOROPLAST ATPASE BIOGENESIS, chloroplastic from Arabidopsis thaliana (Mouse-ear cress).